The following is a 203-amino-acid chain: SPbeta prophage-derived uncharacterized protein YouA (203 aa).

The interval 1-23 is disordered; sequence MAFLNQDGDKYTSAKDDGTGNPI. A compositionally biased stretch (basic and acidic residues) spans 7-18; sequence DGDKYTSAKDDG.

In Bacillus subtilis (strain 168), this protein is SPbeta prophage-derived uncharacterized protein YouA (youA).